The chain runs to 97 residues: MNIRPLHDRVIVKRKEVETKSAGGIVLTGSAAAKSTRGEVLAVGNGRILENGEVKPLDVKVGDIVIFNDGYGVKSEKIDNEEVLIMSESDILAIVEA.

The protein belongs to the GroES chaperonin family. Heptamer of 7 subunits arranged in a ring. Interacts with the chaperonin GroEL.

It is found in the cytoplasm. In terms of biological role, together with the chaperonin GroEL, plays an essential role in assisting protein folding. The GroEL-GroES system forms a nano-cage that allows encapsulation of the non-native substrate proteins and provides a physical environment optimized to promote and accelerate protein folding. GroES binds to the apical surface of the GroEL ring, thereby capping the opening of the GroEL channel. This is Co-chaperonin GroES from Escherichia fergusonii (strain ATCC 35469 / DSM 13698 / CCUG 18766 / IAM 14443 / JCM 21226 / LMG 7866 / NBRC 102419 / NCTC 12128 / CDC 0568-73).